The sequence spans 478 residues: Sugar transporter ERD6-like 15 (478 aa).

12 helical membrane passes run 31 to 51, 67 to 87, 106 to 126, 129 to 149, 161 to 181, 185 to 205, 267 to 287, 305 to 325, 333 to 353, 366 to 386, 406 to 426, and 432 to 452; these read FVLA…IIGY, IADY…GALI, ILFV…LLDL, LLQG…ITEI, FAQL…TIVA, LAIL…FIPE, AFSL…GLNG, FGFI…TVLV, LLLV…ISFF, VLAL…MGSI, MCNL…SYLL, and GTFL…AKLV.

This sequence belongs to the major facilitator superfamily. Sugar transporter (TC 2.A.1.1) family.

It localises to the membrane. Its function is as follows. Sugar transporter. The sequence is that of Sugar transporter ERD6-like 15 from Arabidopsis thaliana (Mouse-ear cress).